The primary structure comprises 149 residues: Transcriptional repressor NrdR (149 aa).

The segment at 3 to 34 is a zinc-finger region; it reads CPFCTAVDTKVIDSRLVGDGSQVRRRRQCLVC. One can recognise an ATP-cone domain in the interval 49 to 139; it reads PRVVKSDEIR…VYRSFEDVRD (91 aa).

Belongs to the NrdR family. Requires Zn(2+) as cofactor.

Its function is as follows. Negatively regulates transcription of bacterial ribonucleotide reductase nrd genes and operons by binding to NrdR-boxes. The chain is Transcriptional repressor NrdR from Proteus mirabilis (strain HI4320).